We begin with the raw amino-acid sequence, 539 residues long: uncharacterized protein (539 aa).

2 consecutive ABC transporter domains span residues 9-276 (LEVK…EFKK) and 288-536 (IKLE…QEMF). ATP contacts are provided by residues 41–48 (GKSGAGKS) and 325–332 (GTSGAGKT).

Belongs to the ABC transporter superfamily.

This is an uncharacterized protein from Methanocaldococcus jannaschii (strain ATCC 43067 / DSM 2661 / JAL-1 / JCM 10045 / NBRC 100440) (Methanococcus jannaschii).